We begin with the raw amino-acid sequence, 619 residues long: DNA mismatch repair protein MutL (619 aa).

Residues 368–378 (VDEPKQVDEPK) show a composition bias toward basic and acidic residues. Residues 368–403 (VDEPKQVDEPKQSSPVQEPKEEIPSFLPTVESKQND) are disordered.

The protein belongs to the DNA mismatch repair MutL/HexB family.

In terms of biological role, this protein is involved in the repair of mismatches in DNA. It is required for dam-dependent methyl-directed DNA mismatch repair. May act as a 'molecular matchmaker', a protein that promotes the formation of a stable complex between two or more DNA-binding proteins in an ATP-dependent manner without itself being part of a final effector complex. The chain is DNA mismatch repair protein MutL from Geobacillus sp. (strain WCH70).